Consider the following 66-residue polypeptide: Large ribosomal subunit protein bL35 (66 aa).

Composition is skewed to basic residues over residues 1–16 and 23–45; these read MPKF…RFKR and KRSH…RQLR. The interval 1–66 is disordered; it reads MPKFKTHRAS…RIRQMLSGLK (66 aa).

This sequence belongs to the bacterial ribosomal protein bL35 family.

This chain is Large ribosomal subunit protein bL35, found in Latilactobacillus sakei subsp. sakei (strain 23K) (Lactobacillus sakei subsp. sakei).